We begin with the raw amino-acid sequence, 345 residues long: UDP-3-O-acylglucosamine N-acyltransferase (345 aa).

Catalysis depends on His-253, which acts as the Proton acceptor.

This sequence belongs to the transferase hexapeptide repeat family. LpxD subfamily. As to quaternary structure, homotrimer.

The enzyme catalyses a UDP-3-O-[(3R)-3-hydroxyacyl]-alpha-D-glucosamine + a (3R)-hydroxyacyl-[ACP] = a UDP-2-N,3-O-bis[(3R)-3-hydroxyacyl]-alpha-D-glucosamine + holo-[ACP] + H(+). It participates in bacterial outer membrane biogenesis; LPS lipid A biosynthesis. In terms of biological role, catalyzes the N-acylation of UDP-3-O-acylglucosamine using 3-hydroxyacyl-ACP as the acyl donor. Is involved in the biosynthesis of lipid A, a phosphorylated glycolipid that anchors the lipopolysaccharide to the outer membrane of the cell. This chain is UDP-3-O-acylglucosamine N-acyltransferase, found in Rickettsia massiliae (strain Mtu5).